We begin with the raw amino-acid sequence, 329 residues long: uncharacterized protein (329 aa).

Residues 38 to 184 (IVKLILKSQE…MACLMRAKNF (147 aa)) form the SIS domain. 56–61 (GVGKSA) contributes to the ATP binding site. 2 consecutive CBS domains span residues 211-267 (QTTN…GLSL) and 276-329 (TLKP…GLKA).

The protein belongs to the SIS family. GutQ/KpsF subfamily.

This is an uncharacterized protein from Helicobacter pylori (strain J99 / ATCC 700824) (Campylobacter pylori J99).